The chain runs to 392 residues: S-adenosylmethionine synthase (392 aa).

Residue His15 coordinates ATP. Asp17 contacts Mg(2+). Glu43 provides a ligand contact to K(+). Residues Glu56 and Gln99 each coordinate L-methionine. Residues Gln99–Glu109 are flexible loop. Residues Asp173–Lys175, Lys239–Phe240, Asp248, Arg254–Lys255, Ala271, and Lys275 contribute to the ATP site. Asp248 contributes to the L-methionine binding site. Lys279 lines the L-methionine pocket.

This sequence belongs to the AdoMet synthase family. In terms of assembly, homotetramer; dimer of dimers. Requires Mg(2+) as cofactor. It depends on K(+) as a cofactor.

It localises to the cytoplasm. The enzyme catalyses L-methionine + ATP + H2O = S-adenosyl-L-methionine + phosphate + diphosphate. Its pathway is amino-acid biosynthesis; S-adenosyl-L-methionine biosynthesis; S-adenosyl-L-methionine from L-methionine: step 1/1. Catalyzes the formation of S-adenosylmethionine (AdoMet) from methionine and ATP. The overall synthetic reaction is composed of two sequential steps, AdoMet formation and the subsequent tripolyphosphate hydrolysis which occurs prior to release of AdoMet from the enzyme. The sequence is that of S-adenosylmethionine synthase from Finegoldia magna (strain ATCC 29328 / DSM 20472 / WAL 2508) (Peptostreptococcus magnus).